The primary structure comprises 156 residues: ATP synthase subunit b (156 aa).

A helical membrane pass occupies residues F7 to P27.

The protein belongs to the ATPase B chain family. F-type ATPases have 2 components, F(1) - the catalytic core - and F(0) - the membrane proton channel. F(1) has five subunits: alpha(3), beta(3), gamma(1), delta(1), epsilon(1). F(0) has three main subunits: a(1), b(2) and c(10-14). The alpha and beta chains form an alternating ring which encloses part of the gamma chain. F(1) is attached to F(0) by a central stalk formed by the gamma and epsilon chains, while a peripheral stalk is formed by the delta and b chains.

It is found in the cell inner membrane. Its function is as follows. F(1)F(0) ATP synthase produces ATP from ADP in the presence of a proton or sodium gradient. F-type ATPases consist of two structural domains, F(1) containing the extramembraneous catalytic core and F(0) containing the membrane proton channel, linked together by a central stalk and a peripheral stalk. During catalysis, ATP synthesis in the catalytic domain of F(1) is coupled via a rotary mechanism of the central stalk subunits to proton translocation. Component of the F(0) channel, it forms part of the peripheral stalk, linking F(1) to F(0). The polypeptide is ATP synthase subunit b (Cupriavidus metallidurans (strain ATCC 43123 / DSM 2839 / NBRC 102507 / CH34) (Ralstonia metallidurans)).